A 138-amino-acid polypeptide reads, in one-letter code: Basic phospholipase A2 B (138 aa).

The first 16 residues, 1-16, serve as a signal peptide directing secretion; that stretch reads MRALWIVAVLLLGVEG. 7 disulfide bridges follow: C42/C131, C44/C60, C59/C111, C65/C138, C66/C104, C73/C97, and C91/C102. Ca(2+) contacts are provided by Y43, G45, and G47. H63 is a catalytic residue. D64 contacts Ca(2+). D105 is a catalytic residue.

Belongs to the phospholipase A2 family. Group II subfamily. D49 sub-subfamily. It depends on Ca(2+) as a cofactor. Expressed by the venom gland.

Its subcellular location is the secreted. It catalyses the reaction a 1,2-diacyl-sn-glycero-3-phosphocholine + H2O = a 1-acyl-sn-glycero-3-phosphocholine + a fatty acid + H(+). In terms of biological role, snake venom phospholipase A2 (PLA2) that shows potent hemolytic activity, and exhibits medium anticoagulant effects by binding to factor Xa (F10) and inhibiting the prothrombinase activity (IC(50) is 90 nM). It is one of the few phospholipases A2 capable of hydrolyzing the phospholipids of E.coli membranes in the presence of a bactericidal/permeability-increasing protein (BPI) of neutrophils. PLA2 catalyzes the calcium-dependent hydrolysis of the 2-acyl groups in 3-sn-phosphoglycerides. This is Basic phospholipase A2 B from Gloydius halys (Chinese water mocassin).